A 205-amino-acid polypeptide reads, in one-letter code: Molybdenum cofactor guanylyltransferase (205 aa).

GTP is bound by residues 14–16, K27, D77, and D107; that span reads LAG. Position 107 (D107) interacts with Mg(2+).

Belongs to the MobA family. As to quaternary structure, monomer. Mg(2+) serves as cofactor.

The protein localises to the cytoplasm. It catalyses the reaction Mo-molybdopterin + GTP + H(+) = Mo-molybdopterin guanine dinucleotide + diphosphate. Transfers a GMP moiety from GTP to Mo-molybdopterin (Mo-MPT) cofactor (Moco or molybdenum cofactor) to form Mo-molybdopterin guanine dinucleotide (Mo-MGD) cofactor. In Burkholderia orbicola (strain MC0-3), this protein is Molybdenum cofactor guanylyltransferase.